The following is a 219-amino-acid chain: ATP-dependent Clp protease proteolytic subunit 1 (219 aa).

Catalysis depends on S113, which acts as the Nucleophile. H138 is a catalytic residue.

Belongs to the peptidase S14 family. In terms of assembly, fourteen ClpP subunits assemble into 2 heptameric rings which stack back to back to give a disk-like structure with a central cavity, resembling the structure of eukaryotic proteasomes.

It localises to the cytoplasm. It catalyses the reaction Hydrolysis of proteins to small peptides in the presence of ATP and magnesium. alpha-casein is the usual test substrate. In the absence of ATP, only oligopeptides shorter than five residues are hydrolyzed (such as succinyl-Leu-Tyr-|-NHMec, and Leu-Tyr-Leu-|-Tyr-Trp, in which cleavage of the -Tyr-|-Leu- and -Tyr-|-Trp bonds also occurs).. Its function is as follows. Cleaves peptides in various proteins in a process that requires ATP hydrolysis. Has a chymotrypsin-like activity. Plays a major role in the degradation of misfolded proteins. Probably partially responsible for degradation of ECF sigma factor SigR prime. In Streptomyces coelicolor (strain ATCC BAA-471 / A3(2) / M145), this protein is ATP-dependent Clp protease proteolytic subunit 1.